Here is a 120-residue protein sequence, read N- to C-terminus: NAD(P)H-quinone oxidoreductase subunit 3, chloroplastic (120 aa).

3 helical membrane-spanning segments follow: residues 10-30 (FWLF…ISKI), 64-84 (MFAL…PWAM), and 89-109 (LGIS…IGLI).

It belongs to the complex I subunit 3 family. NDH is composed of at least 16 different subunits, 5 of which are encoded in the nucleus.

The protein localises to the plastid. It localises to the chloroplast thylakoid membrane. It catalyses the reaction a plastoquinone + NADH + (n+1) H(+)(in) = a plastoquinol + NAD(+) + n H(+)(out). The enzyme catalyses a plastoquinone + NADPH + (n+1) H(+)(in) = a plastoquinol + NADP(+) + n H(+)(out). Its function is as follows. NDH shuttles electrons from NAD(P)H:plastoquinone, via FMN and iron-sulfur (Fe-S) centers, to quinones in the photosynthetic chain and possibly in a chloroplast respiratory chain. The immediate electron acceptor for the enzyme in this species is believed to be plastoquinone. Couples the redox reaction to proton translocation, and thus conserves the redox energy in a proton gradient. In Angiopteris evecta (Mule's foot fern), this protein is NAD(P)H-quinone oxidoreductase subunit 3, chloroplastic.